A 273-amino-acid polypeptide reads, in one-letter code: 2,3,4,5-tetrahydropyridine-2,6-dicarboxylate N-succinyltransferase (273 aa).

Positions 104 and 141 each coordinate substrate.

This sequence belongs to the transferase hexapeptide repeat family. In terms of assembly, homotrimer.

It localises to the cytoplasm. The catalysed reaction is (S)-2,3,4,5-tetrahydrodipicolinate + succinyl-CoA + H2O = (S)-2-succinylamino-6-oxoheptanedioate + CoA. The protein operates within amino-acid biosynthesis; L-lysine biosynthesis via DAP pathway; LL-2,6-diaminopimelate from (S)-tetrahydrodipicolinate (succinylase route): step 1/3. The polypeptide is 2,3,4,5-tetrahydropyridine-2,6-dicarboxylate N-succinyltransferase (Psychrobacter sp. (strain PRwf-1)).